The primary structure comprises 50 residues: Protein PsbN (50 aa).

A helical membrane pass occupies residues 14–34; that stretch reads VAVTILAILLALTGFGLWTAF.

Belongs to the PsbN family.

The protein localises to the cellular thylakoid membrane. In terms of biological role, may play a role in photosystem I and II biogenesis. In Prochlorococcus marinus (strain MIT 9312), this protein is Protein PsbN.